The chain runs to 248 residues: Large ribosomal subunit protein uL30 (248 aa).

M1 bears the N-acetylmethionine mark. 4 consecutive repeat copies span residues 7–18 (KKKEVPAVPETL), 19–30 (KKKRRNFAELKI), 31–42 (KRLRKKFAQKML), and 43–54 (RKARRKLIYEKA). Positions 7-54 (KKKEVPAVPETLKKKRRNFAELKIKRLRKKFAQKMLRKARRKLIYEKA) are 4 X 12 AA tandem repeats. The residue at position 17 (T17) is a Phosphothreonine. An N6-acetyllysine modification is found at K124. K127 bears the N6-succinyllysine mark. Y139 is subject to Phosphotyrosine.

The protein belongs to the universal ribosomal protein uL30 family. In terms of assembly, component of the large ribosomal subunit. Homodimer. Interacts with DHX33.

The protein resides in the cytoplasm. Component of the large ribosomal subunit. The ribosome is a large ribonucleoprotein complex responsible for the synthesis of proteins in the cell. Binds to G-rich structures in 28S rRNA and in mRNAs. Plays a regulatory role in the translation apparatus; inhibits cell-free translation of mRNAs. The chain is Large ribosomal subunit protein uL30 (RPL7) from Homo sapiens (Human).